Consider the following 184-residue polypeptide: Photosystem I assembly protein Ycf4 (184 aa).

The next 2 helical transmembrane spans lie at 21–43 and 58–80; these read NFCW…TSSY and IFFP…SSYL.

Belongs to the Ycf4 family.

The protein resides in the plastid. It localises to the chloroplast thylakoid membrane. In terms of biological role, seems to be required for the assembly of the photosystem I complex. The sequence is that of Photosystem I assembly protein Ycf4 from Calycanthus floridus var. glaucus (Eastern sweetshrub).